Reading from the N-terminus, the 184-residue chain is Large ribosomal subunit protein uL18 (184 aa).

The protein belongs to the universal ribosomal protein uL18 family. In terms of assembly, part of the 50S ribosomal subunit. Contacts the 5S and 23S rRNAs.

Functionally, this is one of the proteins that bind and probably mediate the attachment of the 5S RNA into the large ribosomal subunit, where it forms part of the central protuberance. The protein is Large ribosomal subunit protein uL18 of Natronomonas pharaonis (strain ATCC 35678 / DSM 2160 / CIP 103997 / JCM 8858 / NBRC 14720 / NCIMB 2260 / Gabara) (Halobacterium pharaonis).